A 343-amino-acid chain; its full sequence is Small ribosomal subunit biogenesis GTPase RsgA (343 aa).

A CP-type G domain is found at 116-275 (RGQLKPVAAN…LIDSPGIREF (160 aa)). Residues 163-166 (NKAD) and 217-225 (GQSGVGKSS) each bind GTP. 4 residues coordinate Zn(2+): Cys-299, Cys-304, His-306, and Cys-312.

Belongs to the TRAFAC class YlqF/YawG GTPase family. RsgA subfamily. Monomer. Associates with 30S ribosomal subunit, binds 16S rRNA. Zn(2+) is required as a cofactor.

The protein resides in the cytoplasm. Its function is as follows. One of several proteins that assist in the late maturation steps of the functional core of the 30S ribosomal subunit. Helps release RbfA from mature subunits. May play a role in the assembly of ribosomal proteins into the subunit. Circularly permuted GTPase that catalyzes slow GTP hydrolysis, GTPase activity is stimulated by the 30S ribosomal subunit. The sequence is that of Small ribosomal subunit biogenesis GTPase RsgA from Ectopseudomonas mendocina (strain ymp) (Pseudomonas mendocina).